The chain runs to 320 residues: MADETTTDTPDVQDEDAPDEDAPQTPDDTASDSTGEAAAADTDADAPDENAPDEDAPDAAPQDKDDGDDAPEESSSEEETSHRVTIEELLKAGAHFGHLTSRWNPRMEKYIFMERNNIHIIDLMQSQVLLDEAAEAAKRFARRGKKILFAGTKKQAEDIVREHAEECGMPHMVDRWLGGTMTNFQTIRKSIRRMEEIERMDRDGTLDKLKKKEKLMRLREHEKLEETLGGIRDMANLPSAIYIVDVQREDIAVSEANNLGIPIIAMVDTNGNPKNIDYPIPVNDDALSSIELVTSTLTDAVQEGLQERRMKKEEKKKAAA.

Acidic residues predominate over residues 1-22; that stretch reads MADETTTDTPDVQDEDAPDEDA. A disordered region spans residues 1–83; the sequence is MADETTTDTP…SSSEEETSHR (83 aa). A compositionally biased stretch (low complexity) spans 27 to 41; it reads DDTASDSTGEAAAAD. 2 stretches are compositionally biased toward acidic residues: residues 42-57 and 65-78; these read TDADAPDENAPDEDAP and DDGDDAPEESSSEE.

This sequence belongs to the universal ribosomal protein uS2 family.

This Salinibacter ruber (strain DSM 13855 / M31) protein is Small ribosomal subunit protein uS2.